Here is a 929-residue protein sequence, read N- to C-terminus: MLRRLLQPAYNVALSGTSASTLPRKSASVGLVRTALMPVDYNAGALFCAMRFTSGTEKERKREPKRGSKRRSKATTTLSTPTDAQTSVTGAREGVALPQENMPDAIQPPATLEVRAAEVKEEPLAATPPQIQPQEETMGPIDGEPQLPLHSTLVYNALTGRMTSETSPSFLCLKSIGFGVNNKRQLYVEKPDVLRDLAQRMRKGTATLPSNWPVTIIRALGVILRNRRVEDPAEAIQQMMQVKINNLTHSRYAAVVNAVGDTDLQNILDGGLADEFVAVDLNEEQEKVINLALKGHLMYIGGSAGTGKTVLLRALCRRMQAEGLRVAMTATTGVAGCHIGGSTFHHAMGVSAQGDFVRKNHLLSYDAIIIDEVSMLPKKMFEEFDRVLREEAGAPDVPFGGVQIILCGDFLQLGVINEPPIIHSTTFREKFVKIRLETQVRQAKSSLFADALQQMRVGLVPESLTASVEQLPPGTMVPAAVNLLPTNKEVNTANEEELKRLPGDAVTLTPETGITALRCDTTATLLMRTTKDFKVEEFTKHLRGLLQATVDIPRASMVSAYRIYEDGHAVRVYLPQSESVAWRDAIRERFLEVAGLINDLDIGATVTEIIPSGDGLHTPEHEECLQRLMAKHPIAQPLTLKKGCRVLLRTNLTSRLVNGSIGTVVDFVECSMENIPVALRCERVNRCVDRYRIYCTMECGMPVPLLPVVKFHSGETIVVPPWEFLVGGNPITQYYSLSSVSLPLSLAYAFTVHKVQGLTLVGRVHLELSRMWPCEHLLYVAMSRVRNPEQLSMSSFDPKMVLANEACVKFDRELNTVDNLPSLAEYPVSSWKRCNDMVYHLRRQGTSLDRYLQNGAAKEGGSVPVQQLGLSGPVKGSLEHSMVVSRRLRKLIKQTERTIRMHERRQKKMAVEGAKQTDTTKASSGESLE.

The N-terminal 52 residues, 1–52, are a transit peptide targeting the mitochondrion; that stretch reads MLRRLLQPAYNVALSGTSASTLPRKSASVGLVRTALMPVDYNAGALFCAMRF. The interval 55–89 is disordered; that stretch reads GTEKERKREPKRGSKRRSKATTTLSTPTDAQTSVT. The segment covering 56 to 66 has biased composition (basic and acidic residues); the sequence is TEKERKREPKR. Over residues 74 to 89 the composition is skewed to polar residues; the sequence is ATTTLSTPTDAQTSVT. 302-309 lines the ATP pocket; that stretch reads GSAGTGKT. Residues 776–796 mediate DNA binding; that stretch reads HLLYVAMSRVRNPEQLSMSSF. The disordered stretch occupies residues 902–929; it reads HERRQKKMAVEGAKQTDTTKASSGESLE. A compositionally biased stretch (polar residues) spans 916–929; that stretch reads QTDTTKASSGESLE.

It belongs to the helicase family. PIF1 subfamily. Monomer. Mg(2+) serves as cofactor.

The protein localises to the mitochondrion. It catalyses the reaction Couples ATP hydrolysis with the unwinding of duplex DNA at the replication fork by translocating in the 5'-3' direction. This creates two antiparallel DNA single strands (ssDNA). The leading ssDNA polymer is the template for DNA polymerase III holoenzyme which synthesizes a continuous strand.. The catalysed reaction is ATP + H2O = ADP + phosphate + H(+). DNA-dependent ATPase and probable 5'-3' DNA helicase required for the maintenance of mitochondrial (kinetoplast) genome stability. Essential for replication of kinetoplast minicircles. Involved in the segregation of minicircle progeny. This is ATP-dependent DNA helicase PIF1 from Trypanosoma brucei brucei (strain 927/4 GUTat10.1).